The sequence spans 339 residues: D-erythrose-4-phosphate dehydrogenase (339 aa).

12–13 (RI) provides a ligand contact to NAD(+). Residues 154–156 (SCT), Arg200, 213–214 (TK), and Arg236 contribute to the substrate site. The active-site Nucleophile is the Cys155. Position 318 (Asn318) interacts with NAD(+).

Belongs to the glyceraldehyde-3-phosphate dehydrogenase family. Epd subfamily. In terms of assembly, homotetramer.

It is found in the cytoplasm. It catalyses the reaction D-erythrose 4-phosphate + NAD(+) + H2O = 4-phospho-D-erythronate + NADH + 2 H(+). The protein operates within cofactor biosynthesis; pyridoxine 5'-phosphate biosynthesis; pyridoxine 5'-phosphate from D-erythrose 4-phosphate: step 1/5. Its function is as follows. Catalyzes the NAD-dependent conversion of D-erythrose 4-phosphate to 4-phosphoerythronate. This Proteus mirabilis (strain HI4320) protein is D-erythrose-4-phosphate dehydrogenase.